Consider the following 144-residue polypeptide: MKVLIQRALNACVVVDGETIGAIDHGQLVLVGIEKGDTEVDTQRLADKLLKYRMFGDEDGKMNLNVQQVAGGILLVSQFTLAAETKKGLRPGFSTAAIPEEGERLFNDFVNKVRAQYSKVETGRFGADMKVSFTNDGPVTFMLD.

A Gly-cisPro motif, important for rejection of L-amino acids motif is present at residues Gly-137 to Pro-138.

Belongs to the DTD family. Homodimer.

Its subcellular location is the cytoplasm. The enzyme catalyses glycyl-tRNA(Ala) + H2O = tRNA(Ala) + glycine + H(+). It catalyses the reaction a D-aminoacyl-tRNA + H2O = a tRNA + a D-alpha-amino acid + H(+). Functionally, an aminoacyl-tRNA editing enzyme that deacylates mischarged D-aminoacyl-tRNAs. Also deacylates mischarged glycyl-tRNA(Ala), protecting cells against glycine mischarging by AlaRS. Acts via tRNA-based rather than protein-based catalysis; rejects L-amino acids rather than detecting D-amino acids in the active site. By recycling D-aminoacyl-tRNA to D-amino acids and free tRNA molecules, this enzyme counteracts the toxicity associated with the formation of D-aminoacyl-tRNA entities in vivo and helps enforce protein L-homochirality. The sequence is that of D-aminoacyl-tRNA deacylase from Marinomonas sp. (strain MWYL1).